Here is a 243-residue protein sequence, read N- to C-terminus: Clathrin light chain A (243 aa).

Position 1 is a blocked amino end (Met) (methionine 1). Disordered regions lie at residues 1 to 22 and 49 to 87; these read MAELDPFGVPAGGPALGNGVAG and ILDGGAPGSQPHGEPPGIPDAVDGVTNGDYYQESNGPTD. Over residues 10-20 the composition is skewed to gly residues; it reads PAGGPALGNGV. Positions 95-157 are involved in binding clathrin heavy chain; that stretch reads VDRLQSEPES…QLQKTKANNR (63 aa). Residues serine 100 and serine 201 each carry the phosphoserine modification. Lysine 218 is modified (N6-acetyllysine). Residue serine 231 is modified to Phosphoserine. An N6-acetyllysine modification is found at lysine 237.

Belongs to the clathrin light chain family. Clathrin coats are formed from molecules containing 3 heavy chains and 3 light chains. Interacts with CALY; the interaction stimulates clathrin self-assembly and clathrin-mediated endocytosis. Interacts with CKAP5 and TACC3 forming the TACC3/ch-TOG/clathrin complex located at spindle inter-microtubules bridges; the complex implicates clathrin triskelions.

The protein localises to the cytoplasmic vesicle membrane. It is found in the membrane. The protein resides in the coated pit. Its subcellular location is the cytoplasm. It localises to the cytoskeleton. The protein localises to the spindle. Its function is as follows. Clathrin is the major protein of the polyhedral coat of coated pits and vesicles. Acts as a component of the TACC3/ch-TOG/clathrin complex proposed to contribute to stabilization of kinetochore fibers of the mitotic spindle by acting as inter-microtubule bridge. This is Clathrin light chain A (CLTA) from Bos taurus (Bovine).